The chain runs to 97 residues: Serine protease inhibitor Kazal-type 14 (97 aa).

The signal sequence occupies residues 1–21; the sequence is MAKSFPVFSLLSFILIHLVLS. The Kazal-like domain maps to 34–97; sequence GIIKVKCPYE…RIRFYHDGKC (64 aa). Cystine bridges form between C40/C79, C57/C76, and C65/C97. Residue N51 is glycosylated (N-linked (GlcNAc...) asparagine).

The protein resides in the secreted. In terms of biological role, may be a serine protease inhibitor. The protein is Serine protease inhibitor Kazal-type 14 (SPINK14) of Homo sapiens (Human).